The primary structure comprises 503 residues: Glycerol kinase (503 aa).

Threonine 12 is a binding site for ADP. Threonine 12, threonine 13, and serine 14 together coordinate ATP. Threonine 12 contributes to the sn-glycerol 3-phosphate binding site. Residue arginine 16 coordinates ADP. Sn-glycerol 3-phosphate contacts are provided by arginine 82, glutamate 83, tyrosine 134, and aspartate 243. Glycerol is bound by residues arginine 82, glutamate 83, tyrosine 134, aspartate 243, and glutamine 244. ADP is bound by residues threonine 265 and glycine 308. Residues threonine 265, glycine 308, glutamine 312, and glycine 412 each contribute to the ATP site. Residue glycine 412 coordinates ADP.

Belongs to the FGGY kinase family.

The enzyme catalyses glycerol + ATP = sn-glycerol 3-phosphate + ADP + H(+). The protein operates within polyol metabolism; glycerol degradation via glycerol kinase pathway; sn-glycerol 3-phosphate from glycerol: step 1/1. Its activity is regulated as follows. Inhibited by fructose 1,6-bisphosphate (FBP). Key enzyme in the regulation of glycerol uptake and metabolism. Catalyzes the phosphorylation of glycerol to yield sn-glycerol 3-phosphate. This chain is Glycerol kinase, found in Nitrobacter hamburgensis (strain DSM 10229 / NCIMB 13809 / X14).